The primary structure comprises 244 residues: 23S rRNA (guanosine-2'-O-)-methyltransferase RlmB (244 aa).

S-adenosyl-L-methionine-binding residues include G196, I216, and L225.

It belongs to the class IV-like SAM-binding methyltransferase superfamily. RNA methyltransferase TrmH family. RlmB subfamily. Homodimer.

It localises to the cytoplasm. The enzyme catalyses guanosine(2251) in 23S rRNA + S-adenosyl-L-methionine = 2'-O-methylguanosine(2251) in 23S rRNA + S-adenosyl-L-homocysteine + H(+). Functionally, specifically methylates the ribose of guanosine 2251 in 23S rRNA. The protein is 23S rRNA (guanosine-2'-O-)-methyltransferase RlmB of Pectobacterium atrosepticum (strain SCRI 1043 / ATCC BAA-672) (Erwinia carotovora subsp. atroseptica).